The following is a 506-amino-acid chain: Glycerol kinase (506 aa).

T11 contributes to the ADP binding site. ATP-binding residues include T11, S12, and S13. T11 is a sn-glycerol 3-phosphate binding site. R15 serves as a coordination point for ADP. Sn-glycerol 3-phosphate is bound by residues R81, E82, Y133, and D242. The glycerol site is built by R81, E82, Y133, D242, and Q243. The ADP site is built by T264 and G316. T264, G316, Q320, and G421 together coordinate ATP. The ADP site is built by G421 and N425.

Belongs to the FGGY kinase family.

It catalyses the reaction glycerol + ATP = sn-glycerol 3-phosphate + ADP + H(+). Its pathway is polyol metabolism; glycerol degradation via glycerol kinase pathway; sn-glycerol 3-phosphate from glycerol: step 1/1. With respect to regulation, inhibited by fructose 1,6-bisphosphate (FBP). Key enzyme in the regulation of glycerol uptake and metabolism. Catalyzes the phosphorylation of glycerol to yield sn-glycerol 3-phosphate. The protein is Glycerol kinase of Paracidovorax citrulli (strain AAC00-1) (Acidovorax citrulli).